A 723-amino-acid chain; its full sequence is Fatty acid oxidation complex subunit alpha (723 aa).

Residues 1-189 (MIYQANTLQV…KVGLLDAIVE (189 aa)) form an enoyl-CoA hydratase/isomerase region. D296 is a binding site for substrate. Residues 311-723 (NKATERAAVL…FYDGQQASSL (413 aa)) form a 3-hydroxyacyl-CoA dehydrogenase region. Residues M325, D344, 401–403 (VVE), K408, and S430 contribute to the NAD(+) site. Catalysis depends on H451, which acts as the For 3-hydroxyacyl-CoA dehydrogenase activity. N454 provides a ligand contact to NAD(+). Residues N501 and Y661 each coordinate substrate.

It in the N-terminal section; belongs to the enoyl-CoA hydratase/isomerase family. The protein in the C-terminal section; belongs to the 3-hydroxyacyl-CoA dehydrogenase family. As to quaternary structure, heterotetramer of two alpha chains (FadB) and two beta chains (FadA).

It carries out the reaction a (3S)-3-hydroxyacyl-CoA + NAD(+) = a 3-oxoacyl-CoA + NADH + H(+). The enzyme catalyses a (3S)-3-hydroxyacyl-CoA = a (2E)-enoyl-CoA + H2O. It catalyses the reaction a 4-saturated-(3S)-3-hydroxyacyl-CoA = a (3E)-enoyl-CoA + H2O. The catalysed reaction is (3S)-3-hydroxybutanoyl-CoA = (3R)-3-hydroxybutanoyl-CoA. It carries out the reaction a (3Z)-enoyl-CoA = a 4-saturated (2E)-enoyl-CoA. The enzyme catalyses a (3E)-enoyl-CoA = a 4-saturated (2E)-enoyl-CoA. It functions in the pathway lipid metabolism; fatty acid beta-oxidation. In terms of biological role, involved in the aerobic and anaerobic degradation of long-chain fatty acids via beta-oxidation cycle. Catalyzes the formation of 3-oxoacyl-CoA from enoyl-CoA via L-3-hydroxyacyl-CoA. It can also use D-3-hydroxyacyl-CoA and cis-3-enoyl-CoA as substrate. The polypeptide is Fatty acid oxidation complex subunit alpha (Vibrio atlanticus (strain LGP32) (Vibrio splendidus (strain Mel32))).